A 287-amino-acid chain; its full sequence is Probable 3-hydroxybutyryl-CoA dehydrogenase (287 aa).

The protein belongs to the 3-hydroxyacyl-CoA dehydrogenase family.

It catalyses the reaction (3S)-3-hydroxybutanoyl-CoA + NADP(+) = acetoacetyl-CoA + NADPH + H(+). The protein operates within lipid metabolism; butanoate metabolism. The sequence is that of Probable 3-hydroxybutyryl-CoA dehydrogenase (mmgB) from Bacillus subtilis (strain 168).